An 894-amino-acid chain; its full sequence is Bifunctional enzyme RhaA/RhaB (894 aa).

The segment at 1 to 465 is rhamnulokinase; that stretch reads MGEYRLAVDI…TAFPVTYFLP (465 aa). Positions 466 to 894 are L-rhamnose isomerase; that stretch reads QRSESHVSSR…KRESEKAKQR (429 aa). 3 residues coordinate Mn(2+): H730, D762, and D764.

This sequence in the N-terminal section; belongs to the rhamnulokinase family. The protein in the C-terminal section; belongs to the rhamnose isomerase family. Requires Mn(2+) as cofactor.

The protein resides in the cytoplasm. It catalyses the reaction L-rhamnulose + ATP = L-rhamnulose 1-phosphate + ADP + H(+). The enzyme catalyses L-rhamnopyranose = L-rhamnulose. It participates in carbohydrate degradation; L-rhamnose degradation; glycerone phosphate from L-rhamnose: step 1/3. Its pathway is carbohydrate degradation; L-rhamnose degradation; glycerone phosphate from L-rhamnose: step 2/3. The chain is Bifunctional enzyme RhaA/RhaB (rhaAB) from Shouchella clausii (strain KSM-K16) (Alkalihalobacillus clausii).